A 750-amino-acid polypeptide reads, in one-letter code: Photosystem I P700 chlorophyll a apoprotein A1 (750 aa).

The next 8 helical transmembrane spans lie at 70–93 (VFSAHFGQLAIIFIWLSGMYFHGA), 156–179 (LYSTAIGGLVFAALMLFAGWFHYH), 195–219 (LNHHLAGLLGLGSLSWAGHQVHVSL), 291–309 (TAHHHLAIAVLFLVAGHMY), 346–369 (WHAQLALNLAMLGSLTIIVAHHMY), 385–411 (LSLFTHHMWIGGFLIVGAAAHAAIFMV), 433–455 (AIISHLNWVCIFLGFHSFGLYIH), and 531–549 (FLVHHIHAFTIHVTVLILL). [4Fe-4S] cluster contacts are provided by Cys573 and Cys582. A run of 2 helical transmembrane segments spans residues 589–610 (HVFLGLFWMYNSISVVIFHFSW) and 664–686 (LSAYGLLFLGAHFVWAFSLMFLF). His675 serves as a coordination point for chlorophyll a'. Met683 and Tyr691 together coordinate chlorophyll a. Trp692 lines the phylloquinone pocket. Residues 724-744 (AVGVAHYLLGGIATTWAFFLA) traverse the membrane as a helical segment.

It belongs to the PsaA/PsaB family. In terms of assembly, the PsaA/B heterodimer binds the P700 chlorophyll special pair and subsequent electron acceptors. PSI consists of a core antenna complex that captures photons, and an electron transfer chain that converts photonic excitation into a charge separation. The eukaryotic PSI reaction center is composed of at least 11 subunits. The cofactor is P700 is a chlorophyll a/chlorophyll a' dimer, A0 is one or more chlorophyll a, A1 is one or both phylloquinones and FX is a shared 4Fe-4S iron-sulfur center..

It localises to the plastid. It is found in the chloroplast thylakoid membrane. It carries out the reaction reduced [plastocyanin] + hnu + oxidized [2Fe-2S]-[ferredoxin] = oxidized [plastocyanin] + reduced [2Fe-2S]-[ferredoxin]. In terms of biological role, psaA and PsaB bind P700, the primary electron donor of photosystem I (PSI), as well as the electron acceptors A0, A1 and FX. PSI is a plastocyanin-ferredoxin oxidoreductase, converting photonic excitation into a charge separation, which transfers an electron from the donor P700 chlorophyll pair to the spectroscopically characterized acceptors A0, A1, FX, FA and FB in turn. Oxidized P700 is reduced on the lumenal side of the thylakoid membrane by plastocyanin. The polypeptide is Photosystem I P700 chlorophyll a apoprotein A1 (Marchantia polymorpha (Common liverwort)).